A 324-amino-acid polypeptide reads, in one-letter code: Aldo-keto reductase family 1 member A1-A (324 aa).

NADP(+) is bound by residues 10–19 (GQRMPTVGLG), T20, W21, and D44. Catalysis depends on Y49, which acts as the Proton donor. NADP(+)-binding residues include S161, N162, S210, L212, S214, K262, S263, V264, T265, R268, Q271, and N272.

The protein belongs to the aldo/keto reductase family.

It localises to the cytoplasm. Its subcellular location is the cytosol. The protein resides in the apical cell membrane. The enzyme catalyses a primary alcohol + NADP(+) = an aldehyde + NADPH + H(+). The catalysed reaction is S-nitroso-CoA + NADPH + H(+) = sulfinamide-CoA + NADP(+). It catalyses the reaction S-nitrosoglutathione + NADPH + H(+) = S-(hydroxysulfenamide)glutathione + NADP(+). In terms of biological role, catalyzes the NADPH-dependent reduction of a wide variety of carbonyl-containing compounds to their corresponding alcohols. Displays enzymatic activity towards endogenous metabolites such as aromatic and aliphatic aldehydes, ketones, monosaccharides and bile acids. Acts as an aldehyde-detoxification enzyme. Also acts as an inhibitor of protein S-nitrosylation by mediating degradation of S-nitroso-coenzyme A (S-nitroso-CoA), a cofactor required to S-nitrosylate proteins. Also acts as a S-nitroso-glutathione reductase by catalyzing the NADPH-dependent reduction of S-nitrosoglutathione. Displays no reductase activity towards retinoids. This Danio rerio (Zebrafish) protein is Aldo-keto reductase family 1 member A1-A (akr1a1a).